The sequence spans 132 residues: uncharacterized protein (132 aa).

This is an uncharacterized protein from Acanthamoeba polyphaga (Amoeba).